A 519-amino-acid polypeptide reads, in one-letter code: Nitrogen fixation regulatory protein (519 aa).

Residues 23-93 (LPEIFRQTVE…QALWGRLAQK (71 aa)) form the PAS 1 domain. The region spanning 94 to 148 (KPWSGVLVNRRKDKTLYLAELTVAPVLNEAGETIYYLGMHRDTSELHELEQRVNN) is the PAC domain. A PAS 2 domain is found at 151-217 (LMIEAVVNAA…FETLENQGSA (67 aa)). The region spanning 302-517 (AAIHRLQGPV…RIVVELPFSA (216 aa)) is the Histidine kinase domain. Phosphohistidine; by autocatalysis is present on His305.

It depends on FAD as a cofactor.

The catalysed reaction is ATP + protein L-histidine = ADP + protein N-phospho-L-histidine.. Its function is as follows. Required for the inhibition of NifA activity in response to oxygen and low level of fixed nitrogen. The protein is Nitrogen fixation regulatory protein (nifL) of Azotobacter vinelandii.